Here is a 411-residue protein sequence, read N- to C-terminus: Na(+)-translocating NADH-quinone reductase subunit F (411 aa).

Residues 5-25 (VILALGIAAFTVIVLVLVAII) traverse the membrane as a helical segment. One can recognise a 2Fe-2S ferredoxin-type domain in the interval 36-130 (GDITIDINDD…NMEVELPEEI (95 aa)). [2Fe-2S] cluster contacts are provided by C73, C79, C82, and C114. The FAD-binding FR-type domain occupies 133–273 (VKKWECTVIS…SGPFGEFFAK (141 aa)).

This sequence belongs to the NqrF family. In terms of assembly, composed of six subunits; NqrA, NqrB, NqrC, NqrD, NqrE and NqrF. [2Fe-2S] cluster is required as a cofactor. It depends on FAD as a cofactor.

It is found in the cell inner membrane. The catalysed reaction is a ubiquinone + n Na(+)(in) + NADH + H(+) = a ubiquinol + n Na(+)(out) + NAD(+). Functionally, NQR complex catalyzes the reduction of ubiquinone-1 to ubiquinol by two successive reactions, coupled with the transport of Na(+) ions from the cytoplasm to the periplasm. The first step is catalyzed by NqrF, which accepts electrons from NADH and reduces ubiquinone-1 to ubisemiquinone by a one-electron transfer pathway. This Haemophilus influenzae (strain PittGG) protein is Na(+)-translocating NADH-quinone reductase subunit F.